We begin with the raw amino-acid sequence, 361 residues long: Phospho-N-acetylmuramoyl-pentapeptide-transferase (361 aa).

10 helical membrane-spanning segments follow: residues 26–46, 73–93, 98–118, 139–159, 168–188, 200–220, 237–257, 264–284, 289–309, and 339–359; these read SILA…VLIQ, TMGG…WGDL, VWLV…DDWI, IFGL…AAVT, IALP…IVGF, GLAI…AYAS, AGDL…FLWF, VFMG…IAVI, LVLV…IIQV, and VIVR…ATLK.

The protein belongs to the glycosyltransferase 4 family. MraY subfamily. It depends on Mg(2+) as a cofactor.

It is found in the cell inner membrane. The catalysed reaction is UDP-N-acetyl-alpha-D-muramoyl-L-alanyl-gamma-D-glutamyl-meso-2,6-diaminopimeloyl-D-alanyl-D-alanine + di-trans,octa-cis-undecaprenyl phosphate = di-trans,octa-cis-undecaprenyl diphospho-N-acetyl-alpha-D-muramoyl-L-alanyl-D-glutamyl-meso-2,6-diaminopimeloyl-D-alanyl-D-alanine + UMP. It functions in the pathway cell wall biogenesis; peptidoglycan biosynthesis. In terms of biological role, catalyzes the initial step of the lipid cycle reactions in the biosynthesis of the cell wall peptidoglycan: transfers peptidoglycan precursor phospho-MurNAc-pentapeptide from UDP-MurNAc-pentapeptide onto the lipid carrier undecaprenyl phosphate, yielding undecaprenyl-pyrophosphoryl-MurNAc-pentapeptide, known as lipid I. In Xylella fastidiosa (strain M12), this protein is Phospho-N-acetylmuramoyl-pentapeptide-transferase.